The primary structure comprises 148 residues: uncharacterized protein (148 aa).

Positions 122 to 148 are disordered; sequence HNWRKRMGTRRGRHEQSPTSRPRKGPD. Over residues 123-134 the composition is skewed to basic residues; the sequence is NWRKRMGTRRGR.

This is an uncharacterized protein from Homo sapiens (Human).